Reading from the N-terminus, the 132-residue chain is Small ribosomal subunit protein uS8 (132 aa).

It belongs to the universal ribosomal protein uS8 family. In terms of assembly, part of the 30S ribosomal subunit. Contacts proteins S5 and S12.

One of the primary rRNA binding proteins, it binds directly to 16S rRNA central domain where it helps coordinate assembly of the platform of the 30S subunit. This Streptococcus equi subsp. equi (strain 4047) protein is Small ribosomal subunit protein uS8.